The primary structure comprises 133 residues: Large ribosomal subunit protein bL19 (133 aa).

This sequence belongs to the bacterial ribosomal protein bL19 family.

This protein is located at the 30S-50S ribosomal subunit interface and may play a role in the structure and function of the aminoacyl-tRNA binding site. In Stenotrophomonas maltophilia (strain R551-3), this protein is Large ribosomal subunit protein bL19.